A 285-amino-acid polypeptide reads, in one-letter code: Alpha-acetolactate decarboxylase (285 aa).

An N-terminal signal peptide occupies residues 1 to 25 (MKKNIITSITSLALVAGLSLTAFAA).

Belongs to the alpha-acetolactate decarboxylase family.

The enzyme catalyses (2S)-2-acetolactate + H(+) = (R)-acetoin + CO2. It functions in the pathway polyol metabolism; (R,R)-butane-2,3-diol biosynthesis; (R,R)-butane-2,3-diol from pyruvate: step 2/3. Converts acetolactate into acetoin, which can be excreted by the cells. This may be a mechanism for controlling the internal pH of cells in the stationary stage. The protein is Alpha-acetolactate decarboxylase (aldB) of Brevibacillus brevis (Bacillus brevis).